The sequence spans 367 residues: High osmolarity signaling protein SHO1 (367 aa).

Topologically, residues M1–P32 are cytoplasmic. Residues F33–I53 form a helical membrane-spanning segment. Topologically, residues S54 to F65 are extracellular. An N-linked (GlcNAc...) asparagine glycan is attached at N59. Residues T66–F86 traverse the membrane as a helical segment. At D87–R93 the chain is on the cytoplasmic side. Residues I94–L114 traverse the membrane as a helical segment. Topologically, residues V115 to K122 are extracellular. Residues A123 to Y143 traverse the membrane as a helical segment. The Cytoplasmic portion of the chain corresponds to G144–R367. The residue at position 166 (S166) is a Phosphoserine. The tract at residues S252–D276 is disordered. Residues D259 to T272 are compositionally biased toward low complexity. Residues N300–G361 form the SH3 domain.

Belongs to the SHO1 family. In terms of assembly, forms homooligomers. Interacts (via the SH3 domain) with PBS2. Interacts with FUS1, STE11, STE50 and RNA polymerase II.

The protein resides in the cell membrane. The protein localises to the bud. It is found in the bud neck. It localises to the cell projection. Plasma membrane osmosensor that activates the high osmolarity glycerol (HOG) MAPK signaling pathway in response to high osmolarity. Detects changes in external osmolarity and activates PBS2 through the stimulation of STE11 and targets PBS2 to the plasma membrane. PBS2 activation leads to changes in glycerol production that helps to balance the intracellular and external osmotic pressures. Activates also HOG1 in response to heat stress and mediates resistance to oxidative stress. Involved in the regulation of the mating pathway. May be a receptor that feeds into the pseudohyphal growth pathway. This chain is High osmolarity signaling protein SHO1 (SHO1), found in Saccharomyces cerevisiae (strain ATCC 204508 / S288c) (Baker's yeast).